Reading from the N-terminus, the 78-residue chain is U7-lycotoxin-Ls1a (78 aa).

The N-terminal stretch at Met-1–Ala-22 is a signal peptide. The propeptide occupies Gln-23–Gly-26.

The protein belongs to the neurotoxin 19 (CSTX) family. 07 (U7-Lctx) subfamily. In terms of processing, contains 4 disulfide bonds. In terms of tissue distribution, expressed by the venom gland.

Its subcellular location is the secreted. This is U7-lycotoxin-Ls1a from Lycosa singoriensis (Wolf spider).